Consider the following 393-residue polypeptide: S-adenosylmethionine synthase 1 (393 aa).

Glu-9 provides a ligand contact to Mg(2+). Residue His-15 participates in ATP binding. Glu-43 lines the K(+) pocket. The L-methionine site is built by Glu-56 and Gln-99. ATP-binding positions include 167 to 169 (DGK), 235 to 238 (SGRF), Asp-246, 252 to 253 (RK), Ala-269, Lys-273, and Lys-277. Asp-246 contributes to the L-methionine binding site. Lys-277 serves as a coordination point for L-methionine.

Belongs to the AdoMet synthase family. Homotetramer. The cofactor is Mn(2+). It depends on Mg(2+) as a cofactor. Co(2+) serves as cofactor. Requires K(+) as cofactor. NH4(+) is required as a cofactor. Mostly expressed in roots, and, to a lower extent, in hypocotyls and cotyledons.

It is found in the cytoplasm. It catalyses the reaction L-methionine + ATP + H2O = S-adenosyl-L-methionine + phosphate + diphosphate. It functions in the pathway amino-acid biosynthesis; S-adenosyl-L-methionine biosynthesis; S-adenosyl-L-methionine from L-methionine: step 1/1. Its activity is regulated as follows. Inhibited by products of SAMS reaction (SAM, Pi, PPi), substrate analogs (cycloleucine and ethionine), and alternative nucleotides (GTP, CTP and ADP). Strongly repressed by PPPi. In terms of biological role, catalyzes the formation of S-adenosylmethionine from methionine and ATP. The reaction comprises two steps that are both catalyzed by the same enzyme: formation of S-adenosylmethionine (AdoMet) and triphosphate, and subsequent hydrolysis of the triphosphate. The chain is S-adenosylmethionine synthase 1 (SAMS1) from Catharanthus roseus (Madagascar periwinkle).